The sequence spans 143 residues: MKFIILTCLLAVALAKQRMEQYISSEESMDNSQENFKQNMDVAFFPSQETVENIYIPQMESVEAPMKVSDIISQQQYNQKMMDMSVSAREKTVMTEESKNIQDYMNKMKRYSKITWPQFVKLLHQYQKTMTPWSYYPSTPSQV.

A signal peptide spans M1 to A15.

Belongs to the alpha-casein family. Mammary gland specific. Secreted in milk.

It localises to the secreted. Important role in the capacity of milk to transport calcium phosphate. The protein is Alpha-S2-casein-like B (Csn1s2b) of Mus musculus (Mouse).